Reading from the N-terminus, the 498-residue chain is ATP synthase subunit beta, chloroplastic (498 aa).

172–179 (GGAGVGKT) lines the ATP pocket.

The protein belongs to the ATPase alpha/beta chains family. As to quaternary structure, F-type ATPases have 2 components, CF(1) - the catalytic core - and CF(0) - the membrane proton channel. CF(1) has five subunits: alpha(3), beta(3), gamma(1), delta(1), epsilon(1). CF(0) has four main subunits: a(1), b(1), b'(1) and c(9-12).

It localises to the plastid. The protein localises to the chloroplast thylakoid membrane. It carries out the reaction ATP + H2O + 4 H(+)(in) = ADP + phosphate + 5 H(+)(out). In terms of biological role, produces ATP from ADP in the presence of a proton gradient across the membrane. The catalytic sites are hosted primarily by the beta subunits. This Idiospermum australiense (Ribbonwood tree) protein is ATP synthase subunit beta, chloroplastic.